The following is a 133-amino-acid chain: Small ribosomal subunit protein uS8 (133 aa).

The protein belongs to the universal ribosomal protein uS8 family. As to quaternary structure, part of the 30S ribosomal subunit. Contacts proteins S5 and S12.

One of the primary rRNA binding proteins, it binds directly to 16S rRNA central domain where it helps coordinate assembly of the platform of the 30S subunit. The chain is Small ribosomal subunit protein uS8 from Prochlorococcus marinus (strain MIT 9303).